The sequence spans 123 residues: uncharacterized protein (123 aa).

The span at 31-57 (KLRTEAKKSKDKERTKEKEKHESLAKE) shows a compositional bias: basic and acidic residues. A disordered region spans residues 31–58 (KLRTEAKKSKDKERTKEKEKHESLAKEK). A helical transmembrane segment spans residues 91 to 111 (IIIFLLILLVSGLMVGIFFGI).

The protein resides in the membrane. This is an uncharacterized protein from Mycoplasma genitalium (strain ATCC 33530 / DSM 19775 / NCTC 10195 / G37) (Mycoplasmoides genitalium).